A 256-amino-acid polypeptide reads, in one-letter code: Protein FixA (256 aa).

It belongs to the ETF beta-subunit/FixA family. In terms of assembly, heterodimer of FixA and FixB.

It participates in amine and polyamine metabolism; carnitine metabolism. Required for anaerobic carnitine reduction. May bring reductant to CaiA. In Escherichia coli O139:H28 (strain E24377A / ETEC), this protein is Protein FixA.